Reading from the N-terminus, the 245-residue chain is Orotidine 5'-phosphate decarboxylase (245 aa).

Substrate is bound by residues Asp-22, Lys-44, Asp-71–Thr-80, Thr-131, Arg-192, Gln-201, Gly-221, and Arg-222. Catalysis depends on Lys-73, which acts as the Proton donor.

This sequence belongs to the OMP decarboxylase family. Type 1 subfamily. In terms of assembly, homodimer.

It carries out the reaction orotidine 5'-phosphate + H(+) = UMP + CO2. It participates in pyrimidine metabolism; UMP biosynthesis via de novo pathway; UMP from orotate: step 2/2. Catalyzes the decarboxylation of orotidine 5'-monophosphate (OMP) to uridine 5'-monophosphate (UMP). The protein is Orotidine 5'-phosphate decarboxylase of Escherichia coli O127:H6 (strain E2348/69 / EPEC).